Reading from the N-terminus, the 134-residue chain is Aspartate 1-decarboxylase (134 aa).

Ser25 (schiff-base intermediate with substrate; via pyruvic acid) is an active-site residue. The residue at position 25 (Ser25) is a Pyruvic acid (Ser). Substrate is bound at residue Thr57. Residue Tyr58 is the Proton donor of the active site. Residue 73 to 75 (GAA) participates in substrate binding.

Belongs to the PanD family. Heterooctamer of four alpha and four beta subunits. Pyruvate is required as a cofactor. Post-translationally, is synthesized initially as an inactive proenzyme, which is activated by self-cleavage at a specific serine bond to produce a beta-subunit with a hydroxyl group at its C-terminus and an alpha-subunit with a pyruvoyl group at its N-terminus.

Its subcellular location is the cytoplasm. The catalysed reaction is L-aspartate + H(+) = beta-alanine + CO2. The protein operates within cofactor biosynthesis; (R)-pantothenate biosynthesis; beta-alanine from L-aspartate: step 1/1. Its function is as follows. Catalyzes the pyruvoyl-dependent decarboxylation of aspartate to produce beta-alanine. In Sulfurihydrogenibium sp. (strain YO3AOP1), this protein is Aspartate 1-decarboxylase.